Here is a 325-residue protein sequence, read N- to C-terminus: CRISPR-associated endonuclease Cas1 2 (325 aa).

Mn(2+) is bound by residues Glu-145, His-212, and Asp-225. Positions 283–325 (EEEDPVEEDPTRPGGLWDLEGEVEGGVAYGGDDPGEGAEEPEG) are disordered. Residues 315–325 (DPGEGAEEPEG) are compositionally biased toward acidic residues.

The protein belongs to the CRISPR-associated endonuclease Cas1 family. As to quaternary structure, homodimer, forms a heterotetramer with a Cas2 homodimer. Requires Mg(2+) as cofactor. Mn(2+) is required as a cofactor.

Its function is as follows. CRISPR (clustered regularly interspaced short palindromic repeat), is an adaptive immune system that provides protection against mobile genetic elements (viruses, transposable elements and conjugative plasmids). CRISPR clusters contain spacers, sequences complementary to antecedent mobile elements, and target invading nucleic acids. CRISPR clusters are transcribed and processed into CRISPR RNA (crRNA). Acts as a dsDNA endonuclease. Involved in the integration of spacer DNA into the CRISPR cassette. The polypeptide is CRISPR-associated endonuclease Cas1 2 (Thermus thermophilus (strain ATCC 27634 / DSM 579 / HB8)).